We begin with the raw amino-acid sequence, 520 residues long: MVSVPTGLRPSAVPGVRLPALADQVGAVMAGPDRRAAVPDVTVTGVTLRAQDVLPGDLFAALPGATTHGARHAAEAIERGAVAVLTDAAGVAQLTGGRTTPTLLHPRPRSVLGQLAAAVYAHPSERLTVIGITGTSGKTTTTYLVESGLRAAGRTAGLIGTVGIRIDGADIPSALTTPEAPALQALLAAMAEQRVDTVVMEVSSHALALGRVDGTRFAVGGFTNLSRDHLDFHPTMADYFEAKALLFDPNSPLRAHRAVVCIDDEAGREMAARAGDAVTVSAEGQPAHWRAVEVAPLGTGGQQFTVIDPAGVQHRAGIRLPGHYNVANCLVALALLDAVGVSPEQAAPGLLQTRVPGRMEEIDAGQDFLALVDYAHKPGALRAVLSSLKRPDRRLAVVFGAGGERDPGKRAPMGATAAELADLVVVTDDNPRGEDPAAIRREILAGVTESGCAAEVVEIGDRRAAIRHAVAWAGPGDVVLVAGKGHETGQRTGEHTRPFDDRVELAEALREAVGPRKAQG.

Leu-48 contacts UDP-N-acetyl-alpha-D-muramoyl-L-alanyl-D-glutamate. 134-140 contacts ATP; it reads GTSGKTT. UDP-N-acetyl-alpha-D-muramoyl-L-alanyl-D-glutamate contacts are provided by residues 176–177, Ser-203, and Arg-211; that span reads TT. At Lys-243 the chain carries N6-carboxylysine. Meso-2,6-diaminopimelate is bound by residues Arg-405, 429–432, Gly-483, and Glu-487; that span reads DNPR. The short motif at 429–432 is the Meso-diaminopimelate recognition motif element; the sequence is DNPR.

The protein belongs to the MurCDEF family. MurE subfamily. Mg(2+) serves as cofactor. Carboxylation is probably crucial for Mg(2+) binding and, consequently, for the gamma-phosphate positioning of ATP.

It localises to the cytoplasm. The catalysed reaction is UDP-N-acetyl-alpha-D-muramoyl-L-alanyl-D-glutamate + meso-2,6-diaminopimelate + ATP = UDP-N-acetyl-alpha-D-muramoyl-L-alanyl-gamma-D-glutamyl-meso-2,6-diaminopimelate + ADP + phosphate + H(+). The protein operates within cell wall biogenesis; peptidoglycan biosynthesis. Its function is as follows. Catalyzes the addition of meso-diaminopimelic acid to the nucleotide precursor UDP-N-acetylmuramoyl-L-alanyl-D-glutamate (UMAG) in the biosynthesis of bacterial cell-wall peptidoglycan. This chain is UDP-N-acetylmuramoyl-L-alanyl-D-glutamate--2,6-diaminopimelate ligase, found in Mycolicibacterium paratuberculosis (strain ATCC BAA-968 / K-10) (Mycobacterium paratuberculosis).